The following is a 301-amino-acid chain: Homoserine O-acetyltransferase (301 aa).

The active-site Acyl-thioester intermediate is the cysteine 142. Residues lysine 163 and serine 192 each coordinate substrate. Histidine 235 (proton acceptor) is an active-site residue. Glutamate 237 is a catalytic residue. Arginine 249 is a binding site for substrate.

Belongs to the MetA family.

Its subcellular location is the cytoplasm. It catalyses the reaction L-homoserine + acetyl-CoA = O-acetyl-L-homoserine + CoA. It participates in amino-acid biosynthesis; L-methionine biosynthesis via de novo pathway; O-acetyl-L-homoserine from L-homoserine: step 1/1. In terms of biological role, transfers an acetyl group from acetyl-CoA to L-homoserine, forming acetyl-L-homoserine. This is Homoserine O-acetyltransferase from Bacillus cereus (strain ATCC 14579 / DSM 31 / CCUG 7414 / JCM 2152 / NBRC 15305 / NCIMB 9373 / NCTC 2599 / NRRL B-3711).